A 241-amino-acid chain; its full sequence is Zinc finger CCHC domain-containing protein 24 (241 aa).

A phosphoserine mark is found at Ser-65 and Ser-93. Residues 132 to 149 (YLCHLCFNKGHYIKDCPQ) form a CCHC-type zinc finger.

This Mus musculus (Mouse) protein is Zinc finger CCHC domain-containing protein 24.